An 892-amino-acid polypeptide reads, in one-letter code: Alanine--tRNA ligase (892 aa).

Residues His596, His600, Cys700, and His704 each coordinate Zn(2+).

It belongs to the class-II aminoacyl-tRNA synthetase family. Zn(2+) is required as a cofactor.

It localises to the cytoplasm. It carries out the reaction tRNA(Ala) + L-alanine + ATP = L-alanyl-tRNA(Ala) + AMP + diphosphate. Functionally, catalyzes the attachment of alanine to tRNA(Ala) in a two-step reaction: alanine is first activated by ATP to form Ala-AMP and then transferred to the acceptor end of tRNA(Ala). Also edits incorrectly charged Ser-tRNA(Ala) and Gly-tRNA(Ala) via its editing domain. The sequence is that of Alanine--tRNA ligase from Methanococcus maripaludis (strain DSM 14266 / JCM 13030 / NBRC 101832 / S2 / LL).